A 128-amino-acid polypeptide reads, in one-letter code: Large ribosomal subunit protein bL19 (128 aa).

It belongs to the bacterial ribosomal protein bL19 family.

Its function is as follows. This protein is located at the 30S-50S ribosomal subunit interface and may play a role in the structure and function of the aminoacyl-tRNA binding site. The chain is Large ribosomal subunit protein bL19 from Ralstonia nicotianae (strain ATCC BAA-1114 / GMI1000) (Ralstonia solanacearum).